Here is a 179-residue protein sequence, read N- to C-terminus: Inner membrane-spanning protein YciB (179 aa).

The next 5 helical transmembrane spans lie at 22 to 42 (IYAA…YSWV), 50 to 70 (MALI…FFHN), 76 to 96 (WKVT…QWVM), 121 to 141 (LAWA…AFWL), and 149 to 169 (FKVF…GIYI).

The protein belongs to the YciB family.

Its subcellular location is the cell inner membrane. In terms of biological role, plays a role in cell envelope biogenesis, maintenance of cell envelope integrity and membrane homeostasis. This chain is Inner membrane-spanning protein YciB, found in Klebsiella pneumoniae (strain 342).